A 103-amino-acid chain; its full sequence is Large ribosomal subunit protein bL21 (103 aa).

Belongs to the bacterial ribosomal protein bL21 family. In terms of assembly, part of the 50S ribosomal subunit. Contacts protein L20.

This protein binds to 23S rRNA in the presence of protein L20. In Beijerinckia indica subsp. indica (strain ATCC 9039 / DSM 1715 / NCIMB 8712), this protein is Large ribosomal subunit protein bL21.